Reading from the N-terminus, the 300-residue chain is O-methyltransferase phiE (300 aa).

S-adenosyl-L-methionine contacts are provided by residues 130–131 and 157–158; these read DL and DV.

The protein belongs to the class I-like SAM-binding methyltransferase superfamily. In terms of assembly, homodimer.

The enzyme catalyses phomoidride A + S-adenosyl-L-methionine = (-)-phomoidride B + methanol + S-adenosyl-L-homocysteine + H(+). Its pathway is secondary metabolite biosynthesis. In terms of biological role, O-methyltransferase; part of the gene cluster that mediates the biosynthesis of the antihypercholesterolemic agents phomoidrides which are dimeric anhydrides. Within the pathway, phiE catalyzes the acetalization reaction that converts phomoidride A to phomoidride B. The pathway begins with the highly reducing polyketide synthase phiA that catalyzes the formation of a C12-fatty acyl-ACP, starting from one acetate and 5 malonate units. The hydrolase phiM is involved in the release of the C12-fatty acyl chain from phiA. The alkylcitrate synthase (ACS) phiJ and the alkylcitrate dehydratase (ACDH) phiI then give rise to decarboxylated monomeric anhydrides by coupling the C12-fatty acyl chain with oxalacetic acid. The cyclase phiC is responsible for the dimerization of the monomeric anhydrides which leads to the production of prephomoidride that contains the characteristic bicyclo[4.3.1]deca-1,6-diene system of phomoidrides. Iterative oxidation catalyzed by the alpha-ketoglutarate-dependent dioxygenase phiK produced then phomoidride A. Finally, the methyltransferase phiE converts phomoidride A to phomoidride B via an acetalization reaction. The phosphatidylethanolamine-binding protein phiB and phiN are not essential for dimerization and their functions have still to be determined. The chain is O-methyltransferase phiE from Fungal sp. (strain ATCC 74256).